The chain runs to 454 residues: MADLDVPPQVPQSKTRDLDKLLLRHGNLVDPGFVPGPGLRDDIRDYVRILVIGAGGLGCELLKDLALSGFRNLEVIDMDRIEVTNLNRQFLFRIEDVGKPKAEVAAKRVMERVSGVEIVPHFSRIEDKEIEFYNDFNIIALGLDSIEARKYINGVACGFLEYNEDDTPKRETIKPMVDGGTEGFKGHARVILPGVTPCFECTIYLFPPQVKFPLCTLAETPRNAAHCIEYAHLIQWETVHRGKTFDPDEPEHMKWVYDEAIRRAELFGIPGVTYSLTQGVVKNIIPAIASTNAIISAACALETLKIVSACSKTLVNYLTYNGGEGLYTEVTKFERDTECLVCGPGILIELDTSVTLSKFIEMLEDHPKLLLSKASVKQGENTLYMQAPPVLEEFHRPKLSKPLYDLMGRVQKDTIHVFGQRALKNNEKESCTTKVRVVFKGADGVADMDTAIGA.

The residue at position 2 (Ala-2) is an N-acetylalanine. 56–80 (GLGCELLKDLALSGFRNLEVIDMDR) is a binding site for ATP. Cys-215 functions as the Glycyl thioester intermediate in the catalytic mechanism.

The protein belongs to the ubiquitin-activating E1 family. UBA3 subfamily. Heterodimer of UBA3/ECR1 and AXR1. Interacts with NEDD8 and RCE1. In terms of tissue distribution, expressed in shoot, root and floral meristems, in vascular tissues of cotyledons and mature leaves, and in the stele of the root.

The protein localises to the nucleus. It carries out the reaction ATP + [NEDD8 protein] + [E1 NEDD8-activating enzyme]-L-cysteine = AMP + diphosphate + [E1 NEDD8-activating enzyme]-S-[NEDD8 protein]-yl-L-cysteine.. Its pathway is protein modification; protein neddylation. Catalytic subunit of the dimeric ECR1-AXR1 E1 enzyme. E1 activates NEDD8/RUB1 by first adenylating its C-terminal glycine residue with ATP, thereafter linking this residue to the side chain of the catalytic cysteine, yielding a NEDD8-ECR1 thioester and free AMP. E1 finally transfers NEDD8 to the catalytic cysteine of RCE1. This chain is NEDD8-activating enzyme E1 catalytic subunit (ECR1), found in Arabidopsis thaliana (Mouse-ear cress).